A 492-amino-acid chain; its full sequence is N-succinylglutamate 5-semialdehyde dehydrogenase (492 aa).

220-225 (GSASTG) is a binding site for NAD(+). Active-site residues include Glu243 and Cys277.

Belongs to the aldehyde dehydrogenase family. AstD subfamily.

The enzyme catalyses N-succinyl-L-glutamate 5-semialdehyde + NAD(+) + H2O = N-succinyl-L-glutamate + NADH + 2 H(+). It participates in amino-acid degradation; L-arginine degradation via AST pathway; L-glutamate and succinate from L-arginine: step 4/5. Catalyzes the NAD-dependent reduction of succinylglutamate semialdehyde into succinylglutamate. This is N-succinylglutamate 5-semialdehyde dehydrogenase from Salmonella typhi.